We begin with the raw amino-acid sequence, 130 residues long: Methylglyoxal synthase (130 aa).

An MGS-like domain is found at M1–C130. Substrate is bound by residues H11, K15, T37–T40, and S57–G58. D63 acts as the Proton donor/acceptor in catalysis. H90 serves as a coordination point for substrate.

This sequence belongs to the methylglyoxal synthase family.

It catalyses the reaction dihydroxyacetone phosphate = methylglyoxal + phosphate. In terms of biological role, catalyzes the formation of methylglyoxal from dihydroxyacetone phosphate. The protein is Methylglyoxal synthase of Burkholderia multivorans (strain ATCC 17616 / 249).